Reading from the N-terminus, the 327-residue chain is Methionine import ATP-binding protein MetN (327 aa).

Positions 3–239 constitute an ABC transporter domain; sequence VELKNIEKIY…PKHAVTKELI (237 aa). 36-43 is an ATP binding site; the sequence is GYSGAGKS.

The protein belongs to the ABC transporter superfamily. Methionine importer (TC 3.A.1.24) family. As to quaternary structure, the complex is composed of two ATP-binding proteins (MetN), two transmembrane proteins (MetI) and a solute-binding protein (MetQ).

The protein localises to the cell inner membrane. The catalysed reaction is L-methionine(out) + ATP + H2O = L-methionine(in) + ADP + phosphate + H(+). It catalyses the reaction D-methionine(out) + ATP + H2O = D-methionine(in) + ADP + phosphate + H(+). Functionally, part of the ABC transporter complex MetNIQ involved in methionine import. Responsible for energy coupling to the transport system. In Helicobacter acinonychis (strain Sheeba), this protein is Methionine import ATP-binding protein MetN.